The chain runs to 426 residues: DUF724 domain-containing protein 9 (426 aa).

Composition is skewed to polar residues over residues glutamate 164–glutamate 184 and proline 213–aspartate 222. Positions glutamate 164–serine 248 are disordered. Basic and acidic residues predominate over residues serine 223 to serine 242. Residues leucine 256–proline 425 enclose the DUF724 domain. A coiled-coil region spans residues alanine 370–serine 402.

Expressed in flowers.

It is found in the nucleus. Functionally, may be involved in the polar growth of plant cells via transportation of RNAs. This is DUF724 domain-containing protein 9 from Arabidopsis thaliana (Mouse-ear cress).